Here is a 501-residue protein sequence, read N- to C-terminus: Suppressor of hairless protein homolog (501 aa).

DNA-binding regions lie at residues 58–68 (QKSYGNEKRFF), 166–171 (SKPSKK), and 193–198 (RLRSQT). The 91-residue stretch at 356–446 (PVVESLQLNG…YSTSLTFTYT (91 aa)) folds into the IPT/TIG domain.

This sequence belongs to the Su(H) family. Interacts with activated Notch proteins. Forms a ternary complex with nrarp and the intracellular domain (NICD) of notch1. Interacts with rita1, leading to nuclear export, prevent the interaction between rbpj and NICD product and subsequent down-regulation of the Notch signaling pathway.

It is found in the nucleus. Its subcellular location is the cytoplasm. Transcriptional regulator that plays a central role in Notch signaling, a signaling pathway involved in cell-cell communication that regulates a broad spectrum of cell-fate determinations. Acts as a transcriptional repressor when it is not associated with Notch proteins. When associated with some NICD product of Notch proteins (Notch intracellular domain), it acts as a transcriptional activator that activates transcription of Notch target genes. Required for the transcriptional activation of ESR1, suggesting that it is required during primary neurogenesis in embryos. Binds to the oxygen responsive element of COX4I2 and activates its transcription under hypoxia conditions (4% oxygen). The sequence is that of Suppressor of hairless protein homolog (rbpj) from Xenopus laevis (African clawed frog).